Here is a 256-residue protein sequence, read N- to C-terminus: Hydroxyacylglutathione hydrolase (256 aa).

Residues His-56, His-58, Asp-60, His-61, His-114, Asp-133, and His-171 each coordinate Zn(2+).

The protein belongs to the metallo-beta-lactamase superfamily. Glyoxalase II family. Monomer. Zn(2+) serves as cofactor.

The catalysed reaction is an S-(2-hydroxyacyl)glutathione + H2O = a 2-hydroxy carboxylate + glutathione + H(+). It functions in the pathway secondary metabolite metabolism; methylglyoxal degradation; (R)-lactate from methylglyoxal: step 2/2. Thiolesterase that catalyzes the hydrolysis of S-D-lactoyl-glutathione to form glutathione and D-lactic acid. The protein is Hydroxyacylglutathione hydrolase of Rhodobacter capsulatus (Rhodopseudomonas capsulata).